The sequence spans 241 residues: Dolichol-phosphate mannosyltransferase subunit 1 (241 aa).

11 residues coordinate GDP-alpha-D-mannose: Pro13, Tyr15, Glu17, Ile44, Asp46, Asp99, Ala100, Asp101, Arg128, Arg215, and Lys221. Asp101 is a binding site for Mg(2+). Asp101 is a binding site for Mn(2+).

This sequence belongs to the glycosyltransferase 2 family. The cofactor is Mg(2+). Mn(2+) is required as a cofactor. Ca(2+) serves as cofactor.

It is found in the endoplasmic reticulum. The enzyme catalyses a di-trans,poly-cis-dolichyl phosphate + GDP-alpha-D-mannose = a di-trans,poly-cis-dolichyl beta-D-mannosyl phosphate + GDP. Its pathway is protein modification; protein glycosylation. In terms of biological role, transfers mannose from GDP-mannose to dolichol monophosphate to form dolichol phosphate mannose (Dol-P-Man) which is the mannosyl donor in pathways leading to N-glycosylation, glycosyl phosphatidylinositol membrane anchoring, and O-mannosylation of proteins. The polypeptide is Dolichol-phosphate mannosyltransferase subunit 1 (Drosophila melanogaster (Fruit fly)).